Consider the following 444-residue polypeptide: Porin AaxA (444 aa).

An N-terminal signal peptide occupies residues 1-19; that stretch reads MAFSRFYLLTALYTGGILA. Positions 42-68 are disordered; sequence KNSTQDSDSSPSESSPHPRQEPRRHVL. Over residues 46–56 the composition is skewed to low complexity; the sequence is QDSDSSPSESS.

The protein belongs to the OprB family.

It is found in the cell outer membrane. Facilitates L-arginine uptake, as part of the AaxABC system. The arginine uptake by the bacterium in the macrophage may be a virulence factor against the host innate immune response. The chain is Porin AaxA (aaxA) from Chlamydia felis (strain Fe/C-56) (Chlamydophila felis).